We begin with the raw amino-acid sequence, 398 residues long: Polyferredoxin protein VhuB (398 aa).

11 4Fe-4S ferredoxin-type domains span residues 2–31, 25–53, 54–83, 82–111, 123–152, 152–181, 191–219, 220–249, 259–291, 300–331, and 339–368; these read AGIK…IAPF, AIEI…VENN, GKLI…VDDR, DRFP…IPGK, QEPI…IEDE, ELAV…VAGK, KSFT…YNRE, DLIV…LEVE, EGLV…MINQ, TKTD…MGKI, and NRIE…LTGD. Positions 11, 14, 17, 21, 34, 37, 40, 44, 63, 66, 69, 73, 91, 94, 97, 101, 132, 135, 138, 142, 161, 164, 167, 171, 199, 202, 205, 209, 229, 232, 235, 239, 268, 271, 274, 278, 311, 314, 317, 321, 348, 351, 354, 358, 377, 380, 383, and 387 each coordinate [4Fe-4S] cluster.

[4Fe-4S] cluster serves as cofactor.

This Methanococcus voltae protein is Polyferredoxin protein VhuB (vhuB).